We begin with the raw amino-acid sequence, 1935 residues long: MGDSEMAVFGAAAPYLRKSEKERLEAQTRPFDLKKDVFVPDDKQEFVKAKIVSREGGKVTAETEYGKTVTVKEDQVMQQNPPKFDKIEDMAMLTFLHEPAVLYNLKDRYGSWMIYTYSGLFCVTVNPYKWLPVYTPEVVAAYRGKKRSEAPPHIFSISDNAYQYMLTDRENQSILITGESGAGKTVNTKRVIQYFAVIAAIGDRSKKDQSPGKGTLEDQIIQANPALEAFGNAKTVRNDNSSRFGKFIRIHFGATGKLASADIETYLLEKSRVIFQLKAERDYHIFYQILSNKKPELLDMLLITNNPYDYAFISQGETTVASIDDAEELMATDNAFDVLGFTSEEKNSMYKLTGAIMHFGNMKFKLKQREEQAEPDGTEEADKSAYLMGLNSADLLKGLCHPRVKVGNEYVTKGQNVQQVIYATGALAKAVYERMFNWMVTRINATLETKQPRQYFIGVLDIAGFEIFDFNSFEQLCINFTNEKLQQFFNHHMFVLEQEEYKKEGIEWTFIDFGMDLQACIDLIEKPMGIMSILEEECMFPKATDMTFKAKLFDNHLGKSANFQKPRNIKGKPEAHFSLIHYAGIVDYNIIGWLQKNKDPLNETVVGLYQKSSLKLLSTLFANYAGADAPIEKGKGKAKKGSSFQTVSALHRENLNKLMTNLRSTHPHFVRCIIPNETKSPGVMDNPLVMHQLRCNGVLEGIRICRKGFPNRILYGDFRQRYRILNPAAIPEGQFIDSRKGAEKLLSSLDIDHNQYKFGHTKVFFKAGLLGLLEEMRDERLSRIITRIQAQSRGVLARMEYKKLLERRDSLLVIQWNIRAFMGVKNWPWMKLYFKIKPLLKSAEREKEMASMKEEFTRLKEALEKSEARRKELEEKMVSLLQEKNDLQLQVQAEQDNLADAEERCDQLIKNKIQLEAKVKEMNERLEDEEEMNAELTAKKRKLEDECSELKRDIDDLELTLAKVEKEKHATENKVKNLTEEMAGLDEIIAKLTKEKKALQEAHQQALDDLQAEEDKVNTLTKAKVKLEQQVDDLEGSLEQEKKVRMDLERAKRKLEGDLKLTQESIMDLENDKQQLDERLKKKDFELNALNARIEDEQALGSQLQKKLKELQARIEELEEELEAERTARAKVEKLRSDLSRELEEISERLEEAGGATSVQIEMNKKREAEFQKMRRDLEEATLQHEATAAALRKKHADSVAELGEQIDNLQRVKQKLEKEKSEFKLELDDVTSNMEQIIKAKANLEKMCRTLEDQMNEHRSKAEETQRSVNDLTSQRAKLQTENGELSRQLDEKEALISQLTRGKLTYTQQLEDLKRQLEEEVKAKNALAHALQSARHDCDLLREQYEEETEAKAELQRVLSKANSEVAQWRTKYETDAIQRTEELEEAKKKLAQRLQEAEEAVEAVNAKCSSLEKTKHRLQNEIEDLMVDVERSNAAAAALDKKQRNFDKILAEWKQKYEESQSELESSQKEARSLSTELFKLKNAYEESLEHLETFKRENKNLQEEISDLTEQLGSSGKTIHELEKVRKQLEAEKMELQSALEEAEASLEHEEGKILRAQLEFNQIKAEIERKLAEKDEEMEQAKRNHLRVVDSLQTSLDAETRSRNEALRVKKKMEGDLNEMEIQLSHANRMAAEAQKQVKSLQSLLKDTQIQLDDAVRANDDLKENIAIVERRNNLLQAELEELRAVVEQTERSRKLAEQELIETSERVQLLHSQNTSLINQKKKMDADLSQLQTEVEEAVQECRNAEEKAKKAITDAAMMAEELKKEQDTSAHLERMKKNMEQTIKDLQHRLDEAEQIALKGGKKQLQKLEARVRELENELEAEQKRNAESVKGMRKSERRIKELTYQTEEDRKNLLRLQDLVDKLQLKVKAYKRQAEEAEEQANTNLSKFRKVQHELDEAEERADIAESQVNKLRAKSRDIGTKGLNEE.

One can recognise a Myosin N-terminal SH3-like domain in the interval aspartate 32–proline 81. The region spanning aspartate 85–aspartate 778 is the Myosin motor domain. The residue at position 129 (lysine 129) is an N6,N6,N6-trimethyllysine. Glycine 178 to threonine 185 contacts ATP. Threonine 378 carries the phosphothreonine modification. Actin-binding regions lie at residues leucine 655–glutamate 677 and lysine 757–glycine 771. The region spanning leucine 781–serine 810 is the IQ domain. The stretch at leucine 839–glutamate 1935 forms a coiled coil. Residues serine 1137 and serine 1269 each carry the phosphoserine modification. Residue threonine 1282 is modified to Phosphothreonine. The residue at position 1308 (tyrosine 1308) is a Phosphotyrosine. A Phosphothreonine modification is found at threonine 1309. The residue at position 1510 (serine 1510) is a Phosphoserine. Phosphothreonine is present on threonine 1513. The interval glutamate 1907–glutamate 1935 is disordered. A compositionally biased stretch (basic and acidic residues) spans lysine 1923–glutamate 1935.

This sequence belongs to the TRAFAC class myosin-kinesin ATPase superfamily. Myosin family. In terms of assembly, muscle myosin is a hexameric protein that consists of 2 heavy chain subunits (MHC), 2 alkali light chain subunits (MLC) and 2 regulatory light chain subunits (MLC-2). Interacts with ECPAS. Interacts (via C-terminus) with LRRC39. In terms of tissue distribution, both wild type and variant Gln-403 are detected in skeletal muscle (at protein level).

Its subcellular location is the cytoplasm. It is found in the myofibril. The protein resides in the sarcomere. In terms of biological role, myosins are actin-based motor molecules with ATPase activity essential for muscle contraction. Forms regular bipolar thick filaments that, together with actin thin filaments, constitute the fundamental contractile unit of skeletal and cardiac muscle. This Homo sapiens (Human) protein is Myosin-7 (MYH7).